A 551-amino-acid polypeptide reads, in one-letter code: Structure-specific endonuclease subunit MUS81 (551 aa).

Disordered stretches follow at residues 85-131 (LASG…AGYW) and 231-255 (PEEHHEESPVPEAILSEPGTTEVGV). Ser95 carries the phosphoserine modification. The segment covering 110 to 131 (VQGSSMPVPTQPQAGSTNAGYW) has biased composition (polar residues). Residues 124–243 (GSTNAGYWPA…HHEESPVPEA (120 aa)) are interaction with BLM. A winged helix domain (WHD); critical for endonuclease activity region spans residues 131 to 230 (WPAQNSGARE…GLSTLNTAFQ (100 aa)). Positions 270–372 (LLCVDIGETR…HRIYLVEEHG (103 aa)) constitute an ERCC4 domain. Catalysis depends on residues Asp274, Glu277, and Asp307. Residues Asp274, Glu277, Asp307, Glu333, and Arg334 each contribute to the Mg(2+) site. The helix-hairpin-helix (2HhH); involved in DNA recognition and bending stretch occupies residues 471–545 (VREVFARQLM…LSRTLYQLYC (75 aa)).

Belongs to the XPF family. As to quaternary structure, part of the heterodimeric DNA structure-specific endonuclease complex MUS81-EME1. Part of the heterodimeric DNA structure-specific endonuclease complex MUS81-EME2. Interacts with BLM; may stimulate the endonuclease activity of MUS81. Interacts with SLX4/BTBD12; this interaction is direct and links the MUS81-EME1 complex to SLX4, which may coordinate the action of the structure-specific endonuclease during DNA repair. Interacts with DCLRE1B/Apollo. Interacts with RECQL5; this interaction stimulates mitotic DNA synthesis. Interacts with CHEK2. Mg(2+) serves as cofactor.

It is found in the nucleus. Its subcellular location is the nucleolus. Catalytic subunit of two functionally distinct, structure-specific, heterodimeric DNA endonucleases MUS81-EME1 and MUS81-EME2 that are involved in the maintenance of genome stability. Both endonucleases have essentially the same substrate specificity though MUS81-EME2 is more active than its MUS81-EME1 counterpart. Both cleave 3'-flaps and nicked Holliday junctions, and exhibit limited endonuclease activity with 5' flaps and nicked double-stranded DNAs. MUS81-EME2 which is active during the replication of DNA is more specifically involved in replication fork processing. Replication forks frequently encounter obstacles to their passage, including DNA base lesions, DNA interstrand cross-links, difficult-to-replicate sequences, transcription bubbles, or tightly bound proteins. One mechanism for the restart of a stalled replication fork involves nucleolytic cleavage mediated by the MUS81-EME2 endonuclease. By acting upon the stalled fork, MUS81-EME2 generates a DNA double-strand break (DSB) that can be repaired by homologous recombination, leading to the restoration of an active fork. MUS81-EME2 could also function in telomere maintenance. MUS81-EME1, on the other hand, is active later in the cell cycle and functions in the resolution of mitotic recombination intermediates including the Holliday junctions, the four-way DNA intermediates that form during homologous recombination. The protein is Structure-specific endonuclease subunit MUS81 of Rattus norvegicus (Rat).